A 309-amino-acid chain; its full sequence is Methionyl-tRNA formyltransferase (309 aa).

109-112 (SLLP) lines the (6S)-5,6,7,8-tetrahydrofolate pocket.

The protein belongs to the Fmt family.

The enzyme catalyses L-methionyl-tRNA(fMet) + (6R)-10-formyltetrahydrofolate = N-formyl-L-methionyl-tRNA(fMet) + (6S)-5,6,7,8-tetrahydrofolate + H(+). Its function is as follows. Attaches a formyl group to the free amino group of methionyl-tRNA(fMet). The formyl group appears to play a dual role in the initiator identity of N-formylmethionyl-tRNA by promoting its recognition by IF2 and preventing the misappropriation of this tRNA by the elongation apparatus. The sequence is that of Methionyl-tRNA formyltransferase from Chloroflexus aggregans (strain MD-66 / DSM 9485).